Consider the following 521-residue polypeptide: Bifunctional purine biosynthesis protein PurH (521 aa).

The region spanning 1–147 is the MGS-like domain; it reads MAKITRALIS…KNNADVTVVV (147 aa).

It belongs to the PurH family.

It carries out the reaction (6R)-10-formyltetrahydrofolate + 5-amino-1-(5-phospho-beta-D-ribosyl)imidazole-4-carboxamide = 5-formamido-1-(5-phospho-D-ribosyl)imidazole-4-carboxamide + (6S)-5,6,7,8-tetrahydrofolate. The enzyme catalyses IMP + H2O = 5-formamido-1-(5-phospho-D-ribosyl)imidazole-4-carboxamide. Its pathway is purine metabolism; IMP biosynthesis via de novo pathway; 5-formamido-1-(5-phospho-D-ribosyl)imidazole-4-carboxamide from 5-amino-1-(5-phospho-D-ribosyl)imidazole-4-carboxamide (10-formyl THF route): step 1/1. The protein operates within purine metabolism; IMP biosynthesis via de novo pathway; IMP from 5-formamido-1-(5-phospho-D-ribosyl)imidazole-4-carboxamide: step 1/1. The polypeptide is Bifunctional purine biosynthesis protein PurH (Geotalea uraniireducens (strain Rf4) (Geobacter uraniireducens)).